Reading from the N-terminus, the 859-residue chain is ATP-dependent RNA helicase DDX24 (859 aa).

The residue at position 17 (Lys-17) is an N6-acetyllysine. Ser-60 bears the Phosphoserine mark. Residues 61 to 175 are disordered; the sequence is PAKNPSSLFS…SQSTAAKVPK (115 aa). At Lys-71 the chain carries N6-acetyllysine. Phosphoserine is present on residues Ser-82 and Ser-94. Over residues 82-91 the composition is skewed to acidic residues; it reads SEEEEEEEGE. Basic residues predominate over residues 95–105; the sequence is PKKKIKLKKSK. A compositionally biased stretch (polar residues) spans 106–115; sequence NVATEGTSTQ. Residues 192 to 220 carry the Q motif motif; it reads SAWKDLFVPRPVLRALSFLGFSAPTPIQV. One can recognise a Helicase ATP-binding domain in the interval 224–528; the sequence is APAIRDKLDI…RILHKKHTKK (305 aa). 237 to 244 is an ATP binding site; it reads AETGSGKT. The disordered stretch occupies residues 262-374; it reads NAAPPPSNTE…QTGNLKQELD (113 aa). Positions 277-293 are enriched in basic and acidic residues; the sequence is TRPEAGAETRSPGKAEA. Ser-287 and Ser-295 each carry phosphoserine. Over residues 294–304 the composition is skewed to acidic residues; it reads ESDALPDDTVI. A Phosphothreonine modification is found at Thr-302. Lys-370 is covalently cross-linked (Glycyl lysine isopeptide (Lys-Gly) (interchain with G-Cter in SUMO2)). The short motif at 471–474 is the DEAD box element; it reads DEAD. In terms of domain architecture, Helicase C-terminal spans 578-723; it reads YLYYFLMQYP…LFPVQTKYMD (146 aa). Residues Lys-624, Lys-808, and Lys-825 each participate in a glycyl lysine isopeptide (Lys-Gly) (interchain with G-Cter in SUMO2) cross-link. Polar residues-rich tracts occupy residues 799 to 814 and 823 to 834; these read PLFT…TQSG and PSKSESALSCLS. A disordered region spans residues 799-859; it reads PLFTESQKTK…EQPQPSTSAN (61 aa).

Belongs to the DEAD box helicase family. DDX24/MAK5 subfamily. In terms of assembly, interacts with FADD. Interacts with RIPK1; this interaction disrupts RLR signaling activation of IFN-dependent transcription factor IRF7. Interacts with NIP7. Interacts with EP300; this interaction prevents TP53 acetylation mediated by EP300. Post-translationally, ubiquitinated by MDM2 without targeting DDX24 for proteasomal degradation. Instead, polyubiquitylated DDX24 promotes interaction with NIP7, a component of pre-rRNP processing complex, and associates with pre-rRNA molecules and pre-ribosomal particles.

It localises to the cytoplasm. The protein resides in the nucleus. It catalyses the reaction ATP + H2O = ADP + phosphate + H(+). In terms of biological role, ATP-dependent RNA helicase that plays a role in various aspects of RNA metabolism including pre-mRNA splicing and is thereby involved in different biological processes such as cell cycle regulation or innate immunity. Plays an inhibitory role in TP53 transcriptional activity and subsequently in TP53 controlled cell growth arrest and senescence by inhibiting its EP300 mediated acetylation. Negatively regulates cytosolic RNA-mediated innate immune signaling at least in part by affecting RIPK1/IRF7 interactions. Alternatively, possesses antiviral activity by recognizing gammaherpesvirus transcripts in the context of lytic reactivation. Plays an essential role in cell cycle regulation in vascular smooth muscle cells by interacting with and regulating FANCA (Fanconi anemia complementation group A) mRNA. This chain is ATP-dependent RNA helicase DDX24 (DDX24), found in Pongo abelii (Sumatran orangutan).